Reading from the N-terminus, the 366-residue chain is Chorismate synthase (366 aa).

R48 and R54 together coordinate NADP(+). FMN contacts are provided by residues 125–127 (RSS), 238–239 (NA), G278, 293–297 (KPTSS), and R319.

It belongs to the chorismate synthase family. In terms of assembly, homotetramer. The cofactor is FMNH2.

It catalyses the reaction 5-O-(1-carboxyvinyl)-3-phosphoshikimate = chorismate + phosphate. The protein operates within metabolic intermediate biosynthesis; chorismate biosynthesis; chorismate from D-erythrose 4-phosphate and phosphoenolpyruvate: step 7/7. In terms of biological role, catalyzes the anti-1,4-elimination of the C-3 phosphate and the C-6 proR hydrogen from 5-enolpyruvylshikimate-3-phosphate (EPSP) to yield chorismate, which is the branch point compound that serves as the starting substrate for the three terminal pathways of aromatic amino acid biosynthesis. This reaction introduces a second double bond into the aromatic ring system. This Neisseria meningitidis serogroup B (strain ATCC BAA-335 / MC58) protein is Chorismate synthase.